Reading from the N-terminus, the 153-residue chain is Acylphosphatase-like protein MJ0553 (153 aa).

The Acylphosphatase-like domain maps to Thr4–Glu102.

This is Acylphosphatase-like protein MJ0553 from Methanocaldococcus jannaschii (strain ATCC 43067 / DSM 2661 / JAL-1 / JCM 10045 / NBRC 100440) (Methanococcus jannaschii).